Consider the following 164-residue polypeptide: Probable ubiquitin-conjugating enzyme E2 7 (164 aa).

The UBC core domain occupies 3–163; sequence QSSLLLKKQL…VAQCVRRSQE (161 aa). Cys88 functions as the Glycyl thioester intermediate in the catalytic mechanism.

The protein belongs to the ubiquitin-conjugating enzyme family.

The enzyme catalyses S-ubiquitinyl-[E1 ubiquitin-activating enzyme]-L-cysteine + [E2 ubiquitin-conjugating enzyme]-L-cysteine = [E1 ubiquitin-activating enzyme]-L-cysteine + S-ubiquitinyl-[E2 ubiquitin-conjugating enzyme]-L-cysteine.. It participates in protein modification; protein ubiquitination. Its function is as follows. Catalyzes the covalent attachment of ubiquitin to other proteins. The sequence is that of Probable ubiquitin-conjugating enzyme E2 7 (ubc-7) from Caenorhabditis elegans.